We begin with the raw amino-acid sequence, 109 residues long: Large ribosomal subunit protein bL19 (109 aa).

The protein belongs to the bacterial ribosomal protein bL19 family.

This protein is located at the 30S-50S ribosomal subunit interface and may play a role in the structure and function of the aminoacyl-tRNA binding site. The sequence is that of Large ribosomal subunit protein bL19 from Rubrobacter xylanophilus (strain DSM 9941 / JCM 11954 / NBRC 16129 / PRD-1).